The chain runs to 315 residues: Olfactory receptor 52R1 (315 aa).

At 1 to 28 (MVLASGNSSSHPVSFILLGIPGLESFQL) the chain is on the extracellular side. A glycan (N-linked (GlcNAc...) asparagine) is linked at Asn-7. A helical membrane pass occupies residues 29-49 (WIAFPFCATYAVAVVGNITLL). At 50 to 57 (HVIRIDHT) the chain is on the cytoplasmic side. A helical transmembrane segment spans residues 58 to 78 (LHEPMYLFLAMLAITDLVLSS). The Extracellular segment spans residues 79–102 (STQPKMLAIFWFHAHEIQYHACLI). Cysteines 100 and 192 form a disulfide. The helical transmembrane segment at 103 to 123 (QVFFIHAFSSVESGVLMAMAL) threads the bilayer. Residues 124–142 (DCYVAICFPLRHSSILTPS) lie on the Cytoplasmic side of the membrane. The helical transmembrane segment at 143–163 (VVIKLGTIVMLRGLLWVSPFC) threads the bilayer. Residues 164-199 (FMVSRMPFCQHQAIPQSYCEHMAVLKLVCADTSISR) lie on the Extracellular side of the membrane. Residues 200–220 (GNGLFVAFSVAGFDMIVIGMS) traverse the membrane as a helical segment. The Cytoplasmic portion of the chain corresponds to 221–240 (YVMILRAVLQLPSGEARLKA). The chain crosses the membrane as a helical span at residues 241 to 261 (FSTRSSHICVILALYIPALFS). At 262-276 (FLTYRFGHDVPRVVH) the chain is on the extracellular side. The helical transmembrane segment at 277–297 (ILFANLYLLIPPMLNPIIYGV) threads the bilayer. Topologically, residues 298-315 (RTKQIGDRVIQGCCGNIP) are cytoplasmic.

Belongs to the G-protein coupled receptor 1 family.

It is found in the cell membrane. In terms of biological role, odorant receptor. The polypeptide is Olfactory receptor 52R1 (OR52R1) (Homo sapiens (Human)).